The sequence spans 385 residues: 1-deoxy-D-xylulose 5-phosphate reductoisomerase (385 aa).

Residues T10, G11, S12, I13, K37, and N124 each coordinate NADPH. Residue K125 coordinates 1-deoxy-D-xylulose 5-phosphate. E126 is an NADPH binding site. Residue D150 coordinates Mn(2+). 1-deoxy-D-xylulose 5-phosphate-binding residues include S151, E152, S176, and H199. Mn(2+) is bound at residue E152. G205 contacts NADPH. The 1-deoxy-D-xylulose 5-phosphate site is built by S212, N217, K218, and E221. Mn(2+) is bound at residue E221.

It belongs to the DXR family. Mg(2+) is required as a cofactor. The cofactor is Mn(2+).

The catalysed reaction is 2-C-methyl-D-erythritol 4-phosphate + NADP(+) = 1-deoxy-D-xylulose 5-phosphate + NADPH + H(+). It participates in isoprenoid biosynthesis; isopentenyl diphosphate biosynthesis via DXP pathway; isopentenyl diphosphate from 1-deoxy-D-xylulose 5-phosphate: step 1/6. Functionally, catalyzes the NADPH-dependent rearrangement and reduction of 1-deoxy-D-xylulose-5-phosphate (DXP) to 2-C-methyl-D-erythritol 4-phosphate (MEP). This Clostridium botulinum (strain 657 / Type Ba4) protein is 1-deoxy-D-xylulose 5-phosphate reductoisomerase.